We begin with the raw amino-acid sequence, 644 residues long: 3D-(3,5/4)-trihydroxycyclohexane-1,2-dione hydrolase (644 aa).

Glu-65 is a binding site for thiamine diphosphate. A thiamine pyrophosphate binding region spans residues 442-522 (SLPGDLQRMW…INVLLFDNSG (81 aa)). Residues Asp-493 and Asn-520 each coordinate Mg(2+).

Belongs to the TPP enzyme family. It depends on Mg(2+) as a cofactor. Requires thiamine diphosphate as cofactor.

It carries out the reaction 3D-3,5/4-trihydroxycyclohexane-1,2-dione + H2O = 5-deoxy-D-glucuronate + H(+). Its pathway is polyol metabolism; myo-inositol degradation into acetyl-CoA; acetyl-CoA from myo-inositol: step 3/7. Involved in the cleavage of the C1-C2 bond of 3D-(3,5/4)-trihydroxycyclohexane-1,2-dione (THcHDO) to yield 5-deoxy-glucuronate (5DG). This chain is 3D-(3,5/4)-trihydroxycyclohexane-1,2-dione hydrolase, found in Bacillus thuringiensis (strain Al Hakam).